We begin with the raw amino-acid sequence, 37 residues long: Large ribosomal subunit protein bL36 (37 aa).

The protein belongs to the bacterial ribosomal protein bL36 family.

This Pelotomaculum thermopropionicum (strain DSM 13744 / JCM 10971 / SI) protein is Large ribosomal subunit protein bL36.